The following is a 769-amino-acid chain: Signal transducer and activator of transcription 3.1 (769 aa).

The Essential for nuclear import motif lies at 150 to 162 (DVRKKVQDLEQKM). The 91-residue stretch at 580 to 670 (WNEGYIMGFI…DATNILVSPL (91 aa)) folds into the SH2 domain. Phosphoserine; by NLK is present on Ser-728.

Belongs to the transcription factor STAT family. As to quaternary structure, forms a homodimer or a heterodimer with a related family member, such as stat1. Interacts with nlk.2. Phosphorylation of both tyrosine and serine residues, together with dimerization, is required for mesoderm induction.

It is found in the cytoplasm. The protein localises to the nucleus. Functionally, transcription factor that binds to target promoter sequences and activates transcription upon il6st/gp130 stimulation. Mediates ventralization of embryos, at least in part via inhibition of smad2 signaling. Required for hairy2 to induce dll1/delta1 and promote neural crest cell proliferation and differentiation. Involved in TGFbeta-mediated mesoderm induction in early embryos, acting downstream of map3k7/tak1 and nlk.2. In Xenopus laevis (African clawed frog), this protein is Signal transducer and activator of transcription 3.1 (stat3.1).